We begin with the raw amino-acid sequence, 147 residues long: Allograft inflammatory factor 1 (147 aa).

Position 2 is an N-acetylserine (Ser-2). Lys-11 carries the post-translational modification N6-acetyllysine. Ser-39 is subject to Phosphoserine. Positions 45-80 constitute an EF-hand 1 domain; that stretch reads SKLEGFKEKYMEFDLNGNGDIDIMSLKRMLEKLGVP. Ca(2+) is bound by residues Asp-58, Asn-60, Asn-62, Asp-64, Thr-100, and Asp-105. The region spanning 81-115 is the EF-hand 2; degenerate domain; the sequence is KTHLELKKLIGEVSSGSGETFSYPDFLRMMLGKRS. Residues 128-147 form a disordered region; that stretch reads AREKEKPTGPPAKKAISELP.

In terms of assembly, homodimer (Potential). Monomer. Interacts with LCP1. Phosphorylated on serine residues. In terms of tissue distribution, detected in T-lymphocytes and peripheral blood mononuclear cells.

The protein localises to the cytoplasm. Its subcellular location is the cytoskeleton. It is found in the cell projection. It localises to the ruffle membrane. The protein resides in the phagocytic cup. Actin-binding protein that enhances membrane ruffling and RAC activation. Enhances the actin-bundling activity of LCP1. Binds calcium. Plays a role in RAC signaling and in phagocytosis. May play a role in macrophage activation and function. Promotes the proliferation of vascular smooth muscle cells and of T-lymphocytes. Enhances lymphocyte migration. Plays a role in vascular inflammation. In Homo sapiens (Human), this protein is Allograft inflammatory factor 1 (AIF1).